The sequence spans 202 residues: Small ribosomal subunit protein uS4 (202 aa).

The disordered stretch occupies residues 22 to 43 (TRKSARRAYPPGQHGQNRKKRS). The 63-residue stretch at 90–152 (MRLDNTVFRL…APSRKLVENN (63 aa)) folds into the S4 RNA-binding domain.

The protein belongs to the universal ribosomal protein uS4 family. As to quaternary structure, part of the 30S ribosomal subunit. Contacts protein S5. The interaction surface between S4 and S5 is involved in control of translational fidelity.

Functionally, one of the primary rRNA binding proteins, it binds directly to 16S rRNA where it nucleates assembly of the body of the 30S subunit. In terms of biological role, with S5 and S12 plays an important role in translational accuracy. The protein is Small ribosomal subunit protein uS4 of Nostoc sp. (strain PCC 7120 / SAG 25.82 / UTEX 2576).